The chain runs to 466 residues: Soluble pyridine nucleotide transhydrogenase (466 aa).

36–45 (ERYHNVGGGC) provides a ligand contact to FAD.

The protein belongs to the class-I pyridine nucleotide-disulfide oxidoreductase family. FAD serves as cofactor.

Its subcellular location is the cytoplasm. The enzyme catalyses NAD(+) + NADPH = NADH + NADP(+). Its function is as follows. Conversion of NADPH, generated by peripheral catabolic pathways, to NADH, which can enter the respiratory chain for energy generation. This Salmonella gallinarum (strain 287/91 / NCTC 13346) protein is Soluble pyridine nucleotide transhydrogenase.